The sequence spans 499 residues: MDNMNHEELNDQLLVRREKLHNLREQGIDPFGKRFERTNATNDLLSLYGEFSKEELEEKEISVSIAGRIMTKRGKGKAGFAHIQDLHGQVQIYVRKDAVGDEEYELFKTADLGDLVGIEGKVFKTNVGELSVKATGFTLLTKSLRPLPDKYHGLKDVEQRYRQRYLDLITSMESRETFVTRSKIIREMRRYLDDNGYLEVETPMMHAIAGGASARPFITHHNALDMELYMRIAIELHLKRLIVGGLEKVYEIGRVFRNEGVSTRHNPEFTMIELYEAYADYKDIMKLTENMVAHIAKQVLGTTTIQYGDYEINLEPEWTRLHMVDAIKEHSGADFWNPMSVEEARELAKEHNVEIKDTMEVGHIINEFFEQKVEDKLIQPTFIYGHPVEISPLAKKNDEDPRFTDRFELFIVAREHANAFTELNDPIDQKERFEAQLKEREQGNDEAHMMDDDYIEALEYGMPPTGGLGIGIDRLVMLLTNAPSIRDVLLFPAMRHKQD.

2 residues coordinate Mg(2+): E408 and E415.

Belongs to the class-II aminoacyl-tRNA synthetase family. Homodimer. Mg(2+) is required as a cofactor.

It is found in the cytoplasm. It catalyses the reaction tRNA(Lys) + L-lysine + ATP = L-lysyl-tRNA(Lys) + AMP + diphosphate. In Bacillus thuringiensis (strain Al Hakam), this protein is Lysine--tRNA ligase.